The primary structure comprises 122 residues: Holo-[acyl-carrier-protein] synthase (122 aa).

Mg(2+) is bound by residues aspartate 8 and glutamate 56.

This sequence belongs to the P-Pant transferase superfamily. AcpS family. Mg(2+) serves as cofactor.

It localises to the cytoplasm. The enzyme catalyses apo-[ACP] + CoA = holo-[ACP] + adenosine 3',5'-bisphosphate + H(+). Functionally, transfers the 4'-phosphopantetheine moiety from coenzyme A to a Ser of acyl-carrier-protein. This chain is Holo-[acyl-carrier-protein] synthase, found in Alkaliphilus metalliredigens (strain QYMF).